We begin with the raw amino-acid sequence, 99 residues long: Small ribosomal subunit protein bS18 (99 aa).

The span at 1–25 shows a compositional bias: basic and acidic residues; it reads MAEDHPSVDLDTHLSSPRESEESAP. Positions 1–28 are disordered; sequence MAEDHPSVDLDTHLSSPRESEESAPKKN.

Belongs to the bacterial ribosomal protein bS18 family. In terms of assembly, part of the 30S ribosomal subunit. Forms a tight heterodimer with protein bS6.

Binds as a heterodimer with protein bS6 to the central domain of the 16S rRNA, where it helps stabilize the platform of the 30S subunit. The chain is Small ribosomal subunit protein bS18 from Treponema pallidum (strain Nichols).